Reading from the N-terminus, the 362-residue chain is Solute carrier family 25 member 3 (362 aa).

The transit peptide at Met-1–Ala-49 directs the protein to the mitochondrion. Over Ala-50–Arg-63 the chain is Mitochondrial intermembrane. 3 Solcar repeats span residues Arg-63–Leu-147, Trp-160–Ala-244, and Glu-261–Tyr-339. A helical transmembrane segment spans residues Phe-64–Leu-86. The Mitochondrial matrix portion of the chain corresponds to Asp-87–Lys-121. An N6-acetyllysine modification is found at Lys-99. Lys-112 is subject to N6-methyllysine. A helical transmembrane segment spans residues Gly-122 to Tyr-141. Over Glu-142–Arg-161 the chain is Mitochondrial intermembrane. A helical transmembrane segment spans residues Thr-162–Met-183. Residues Glu-184–Lys-218 are Mitochondrial matrix-facing. Tyr-196 carries the phosphotyrosine modification. Lys-209 carries the N6-acetyllysine modification. The chain crosses the membrane as a helical span at residues Gly-219–Phe-238. The Mitochondrial intermembrane segment spans residues Glu-239–Glu-261. The chain crosses the membrane as a helical span at residues Gln-262–Ala-284. At Asp-285–Gly-314 the chain is on the mitochondrial matrix side. The chain crosses the membrane as a helical span at residues Leu-315–Tyr-333. The Mitochondrial intermembrane segment spans residues Asp-334–Gln-362.

It belongs to the mitochondrial carrier (TC 2.A.29) family. In terms of assembly, interacts with PPIF; the interaction is impaired by CsA. Expressed in heart, diaphragm and skeletal muscle (at protein level). Not detected in liver, lung, brain, and kidney (at protein level). In terms of tissue distribution, ubiquitous (at protein level).

The protein localises to the mitochondrion inner membrane. The enzyme catalyses phosphate(in) + H(+)(in) = phosphate(out) + H(+)(out). Up-regulated in the presence of cardiolipin. Inorganic ion transporter that transports phosphate or copper ions across the mitochondrial inner membrane into the matrix compartment. Mediates proton-coupled symport of phosphate ions necessary for mitochondrial oxidative phosphorylation of ADP to ATP. Transports copper ions probably in the form of anionic copper(I) complexes to maintain mitochondrial matrix copper pool and to supply copper for cytochrome C oxidase complex assembly. May also play a role in regulation of the mitochondrial permeability transition pore (mPTP). In Bos taurus (Bovine), this protein is Solute carrier family 25 member 3.